The sequence spans 864 residues: Leucine--tRNA ligase (864 aa).

The 'HIGH' region signature appears at 42-52; the sequence is PYPSGKLHMGH. The 'KMSKS' region signature appears at 619-623; the sequence is KMSKS. Residue Lys622 coordinates ATP.

Belongs to the class-I aminoacyl-tRNA synthetase family.

The protein resides in the cytoplasm. It catalyses the reaction tRNA(Leu) + L-leucine + ATP = L-leucyl-tRNA(Leu) + AMP + diphosphate. The chain is Leucine--tRNA ligase from Wigglesworthia glossinidia brevipalpis.